A 498-amino-acid chain; its full sequence is Angiopoietin-1 (498 aa).

Positions 1–19 (MTVFLSFAFLAAILTHIGC) are cleaved as a signal peptide. Asparagine 92, asparagine 122, asparagine 154, asparagine 243, and asparagine 295 each carry an N-linked (GlcNAc...) asparagine glycan. The stretch at 158-254 (RLEIQLLENS…SVLQKQQLEL (97 aa)) forms a coiled coil. In terms of domain architecture, Fibrinogen C-terminal spans 277-497 (KEEVKPFRDC…STTMMIRPLD (221 aa)). Disulfide bonds link cysteine 286–cysteine 315 and cysteine 439–cysteine 452.

In terms of assembly, homooligomer. Interacts with TEK/TIE2. Interacts with SVEP1/polydom. Interacts with THBD; this interaction significantly inhibits the generation of activated PC and TAFIa/CPB2 by the thrombin/thrombomodulin complex.

It is found in the secreted. Its function is as follows. Binds and activates TIE2 receptor by inducing its tyrosine phosphorylation. Implicated in endothelial developmental processes later and distinct from that of VEGF. Appears to play a crucial role in mediating reciprocal interactions between the endothelium and surrounding matrix and mesenchyme. Mediates blood vessel maturation/stability. It may play an important role in the heart early development. The protein is Angiopoietin-1 (ANGPT1) of Sus scrofa (Pig).